The chain runs to 66 residues: Sec-independent protein translocase protein TatA (66 aa).

Residues 1-21 traverse the membrane as a helical segment; the sequence is MIGGLGMPELIIILVIILIIF. Positions 45 to 66 are disordered; the sequence is RDAELNEGDKDDKEKEQEKLDK.

This sequence belongs to the TatA/E family. In terms of assembly, the Tat system comprises two distinct complexes: a TatABC complex, containing multiple copies of TatA, TatB and TatC subunits, and a separate TatA complex, containing only TatA subunits. Substrates initially bind to the TatABC complex, which probably triggers association of the separate TatA complex to form the active translocon.

The protein localises to the cell inner membrane. In terms of biological role, part of the twin-arginine translocation (Tat) system that transports large folded proteins containing a characteristic twin-arginine motif in their signal peptide across membranes. TatA could form the protein-conducting channel of the Tat system. This Desulforapulum autotrophicum (strain ATCC 43914 / DSM 3382 / VKM B-1955 / HRM2) (Desulfobacterium autotrophicum) protein is Sec-independent protein translocase protein TatA.